The sequence spans 138 residues: Large ribosomal subunit protein uL16 (138 aa).

Residues 1–13 (MLQPSRRKFRKEQ) show a composition bias toward basic residues. Residues 1-20 (MLQPSRRKFRKEQKGRNTGV) form a disordered region.

The protein belongs to the universal ribosomal protein uL16 family. Part of the 50S ribosomal subunit.

Binds 23S rRNA and is also seen to make contacts with the A and possibly P site tRNAs. This Leptothrix cholodnii (strain ATCC 51168 / LMG 8142 / SP-6) (Leptothrix discophora (strain SP-6)) protein is Large ribosomal subunit protein uL16.